A 239-amino-acid chain; its full sequence is Norbelladine 4'-O-methyltransferase 3 (239 aa).

S-adenosyl-L-methionine is bound by residues valine 55, glutamate 77, glycine 79 to valine 80, serine 85, aspartate 103, and alanine 132. Aspartate 155 contributes to the a divalent metal cation binding site. Aspartate 157 is an S-adenosyl-L-methionine binding site. A divalent metal cation-binding residues include aspartate 181 and asparagine 182.

This sequence belongs to the class I-like SAM-binding methyltransferase superfamily. Cation-dependent O-methyltransferase family. Mg(2+) is required as a cofactor.

The enzyme catalyses norbelladine + S-adenosyl-L-methionine = 4'-O-methylnorbelladine + S-adenosyl-L-homocysteine + H(+). It participates in alkaloid biosynthesis. In terms of biological role, 4'-O-methyltransferase converting norbelladine to 4'-O-methylnorbelladine. 4'-O-methylnorbelladine is a precursor to all Amaryllidaceae alkaloids such as galanthamine, lycorine and haemanthamine, and including haemanthamine- and crinamine-type alkaloids, promising anticancer agents. This Narcissus aff. pseudonarcissus MK-2014 (Daffodil) protein is Norbelladine 4'-O-methyltransferase 3.